The following is a 999-amino-acid chain: Bifunctional glutamine synthetase adenylyltransferase/adenylyl-removing enzyme (999 aa).

Residues 1 to 483 are adenylyl removase; the sequence is MTPGRRSSTF…LHEKLFYRPL (483 aa). Positions 489-999 are adenylyl transferase; it reads QLAPGEARLS…RTVVEDLFYA (511 aa).

Belongs to the GlnE family. It depends on Mg(2+) as a cofactor.

The enzyme catalyses [glutamine synthetase]-O(4)-(5'-adenylyl)-L-tyrosine + phosphate = [glutamine synthetase]-L-tyrosine + ADP. It carries out the reaction [glutamine synthetase]-L-tyrosine + ATP = [glutamine synthetase]-O(4)-(5'-adenylyl)-L-tyrosine + diphosphate. In terms of biological role, adenylation and deadenylation of glutamate--ammonia ligase. Functionally, involved in the regulation of glutamine synthetase GlnA, a key enzyme in the process to assimilate ammonia. When cellular nitrogen levels are high, the C-terminal adenylyl transferase (AT) inactivates GlnA by covalent transfer of an adenylyl group from ATP to specific tyrosine residue of GlnA, thus reducing its activity. Conversely, when nitrogen levels are low, the N-terminal adenylyl removase (AR) activates GlnA by removing the adenylyl group by phosphorolysis, increasing its activity. The regulatory region of GlnE binds the signal transduction protein PII (GlnB) which indicates the nitrogen status of the cell. The protein is Bifunctional glutamine synthetase adenylyltransferase/adenylyl-removing enzyme of Streptomyces coelicolor (strain ATCC BAA-471 / A3(2) / M145).